Reading from the N-terminus, the 120-residue chain is Immunoglobulin kappa variable 2-30 (120 aa).

The first 20 residues, 1–20 (MRLPAQLLGLLMLWVPGSSG), serve as a signal peptide directing secretion. The segment at 21 to 43 (DVVMTQSPLSLPVTLGQPASISC) is framework-1. Residues 21 to 120 (DVVMTQSPLS…YYCMQGTHWP (100 aa)) enclose the Ig-like domain. A disulfide bridge links Cys-43 with Cys-113. Residues 44–59 (RSSQSLVYSDGNTYLN) form a complementarity-determining-1 region. Positions 60-74 (WFQQRPGQSPRRLIY) are framework-2. A complementarity-determining-2 region spans residues 75–81 (KVSNRDS). Residues 82-113 (GVPDRFSGSGSGTDFTLKISRVEAEDVGVYYC) are framework-3. The interval 114-120 (MQGTHWP) is complementarity-determining-3.

As to quaternary structure, immunoglobulins are composed of two identical heavy chains and two identical light chains; disulfide-linked.

The protein localises to the secreted. It is found in the cell membrane. Its function is as follows. V region of the variable domain of immunoglobulin light chains that participates in the antigen recognition. Immunoglobulins, also known as antibodies, are membrane-bound or secreted glycoproteins produced by B lymphocytes. In the recognition phase of humoral immunity, the membrane-bound immunoglobulins serve as receptors which, upon binding of a specific antigen, trigger the clonal expansion and differentiation of B lymphocytes into immunoglobulins-secreting plasma cells. Secreted immunoglobulins mediate the effector phase of humoral immunity, which results in the elimination of bound antigens. The antigen binding site is formed by the variable domain of one heavy chain, together with that of its associated light chain. Thus, each immunoglobulin has two antigen binding sites with remarkable affinity for a particular antigen. The variable domains are assembled by a process called V-(D)-J rearrangement and can then be subjected to somatic hypermutations which, after exposure to antigen and selection, allow affinity maturation for a particular antigen. In Homo sapiens (Human), this protein is Immunoglobulin kappa variable 2-30.